The following is a 202-amino-acid chain: MAVQRKYRASRRLGVSLWGRSKDPFNTRNYPPGQHGNMGYKKPSDFGKQFAAHKKFKFYYAISSKQMRNVFLKAYKKRGDTGDNFVGLLESRLSSILYNSGLVPTIFSARQLISHKHVLVNGKTVNISSYIVKVGDVVTLKEKAKNLPAVIAAIQSQEHKVPDYLEVDTQEKSVRYLRVPKYCEVPYPATMEVNLVIEFYSR.

The S4 RNA-binding domain maps to 91–168 (SRLSSILYNS…HKVPDYLEVD (78 aa)).

The protein belongs to the universal ribosomal protein uS4 family. Part of the 30S ribosomal subunit. Contacts protein S5. The interaction surface between S4 and S5 is involved in control of translational fidelity.

Its function is as follows. One of the primary rRNA binding proteins, it binds directly to 16S rRNA where it nucleates assembly of the body of the 30S subunit. In terms of biological role, with S5 and S12 plays an important role in translational accuracy. In Ehrlichia canis (strain Jake), this protein is Small ribosomal subunit protein uS4.